The chain runs to 271 residues: 5'-AMP-activated protein kinase subunit beta-2 (271 aa).

A disordered region spans residues 1 to 46; that stretch reads MGNTTSERVSGERHGAKAARAEGGGHGPGKEHKIMVGSTDDPSVFS. The residue at position 38 (serine 38) is a Phosphoserine; by ULK1. The residue at position 39 (threonine 39) is a Phosphothreonine; by ULK1. Serine 68 carries the phosphoserine; by ULK1 modification. Phosphoserine is present on residues serine 94 and serine 107. A Phosphothreonine modification is found at threonine 147. Phosphoserine is present on residues serine 157, serine 169, serine 173, and serine 183.

Belongs to the 5'-AMP-activated protein kinase beta subunit family. AMPK is a heterotrimer of an alpha catalytic subunit (PRKAA1 or PRKAA2), a beta (PRKAB1 or PRKAB2) and a gamma non-catalytic subunits (PRKAG1, PRKAG2 or PRKAG3). Post-translationally, phosphorylated when associated with the catalytic subunit (PRKAA1 or PRKAA2). Phosphorylated by ULK1 and ULK2; leading to negatively regulate AMPK activity and suggesting the existence of a regulatory feedback loop between ULK1, ULK2 and AMPK.

Functionally, non-catalytic subunit of AMP-activated protein kinase (AMPK), an energy sensor protein kinase that plays a key role in regulating cellular energy metabolism. In response to reduction of intracellular ATP levels, AMPK activates energy-producing pathways and inhibits energy-consuming processes: inhibits protein, carbohydrate and lipid biosynthesis, as well as cell growth and proliferation. AMPK acts via direct phosphorylation of metabolic enzymes, and by longer-term effects via phosphorylation of transcription regulators. Also acts as a regulator of cellular polarity by remodeling the actin cytoskeleton; probably by indirectly activating myosin. Beta non-catalytic subunit acts as a scaffold on which the AMPK complex assembles, via its C-terminus that bridges alpha (PRKAA1 or PRKAA2) and gamma subunits (PRKAG1, PRKAG2 or PRKAG3). This chain is 5'-AMP-activated protein kinase subunit beta-2 (Prkab2), found in Mus musculus (Mouse).